Reading from the N-terminus, the 370-residue chain is High affinity iron permease ftrA (370 aa).

Helical transmembrane passes span Val5–Val25, Val52–Gly72, Leu88–Leu108, Ala148–Ile168, Ala179–Tyr199, Ser206–Phe226, and Tyr293–Met313. The interval Arg335–Val370 is disordered. Over residues Thr351–Ser360 the composition is skewed to polar residues.

This sequence belongs to the oxidase-dependent Fe transporter (OFeT) (TC 9.A.10.1) family.

The protein resides in the cell membrane. Its function is as follows. High affinity iron permease; part of the reductive iron assimilatory system (RIA), a siderophore-independent high affinity iron uptake mechanism. In Aspergillus fumigatus (strain ATCC MYA-4609 / CBS 101355 / FGSC A1100 / Af293) (Neosartorya fumigata), this protein is High affinity iron permease ftrA.